A 316-amino-acid chain; its full sequence is Olfactory receptor 8J1 (316 aa).

Residues 1–25 (MAPENFTRVTEFILTGVSSCPELQI) lie on the Extracellular side of the membrane. Asparagine 5 carries an N-linked (GlcNAc...) asparagine glycan. The chain crosses the membrane as a helical span at residues 26–46 (PLFLVFLVLYGLTMAGNLGII). The Cytoplasmic portion of the chain corresponds to 47–54 (TLTSVDSR). Residues 55-75 (LQTPMYFFLQHLALINLGNST) traverse the membrane as a helical segment. Residues 76–99 (VIAPKMLINFLVKKKTTSFYECAT) lie on the Extracellular side of the membrane. A disulfide bridge links cysteine 97 with cysteine 189. The chain crosses the membrane as a helical span at residues 100–120 (QLGGFLFFIVSEVIMLALMAY). Residues 121 to 139 (DRYVAICNPLLYMVVVSRR) lie on the Cytoplasmic side of the membrane. The chain crosses the membrane as a helical span at residues 140 to 160 (LCLLLVSLTYLYGFSTAIVVS). Residues 161–197 (SYVFSVSYCSSNIINHFYCDNVPLLALSCSDTYLPET) lie on the Extracellular side of the membrane. Residues 198 to 217 (VVFISAATNVVGSLIIVLVS) form a helical membrane-spanning segment. Topologically, residues 218 to 237 (YFNIVLSILKICSSEGRKKA) are cytoplasmic. A helical membrane pass occupies residues 238-258 (FSTCASHMMAVTIFYGTLLFM). The Extracellular segment spans residues 259–272 (YVQPRSNHSLDTDD). A helical transmembrane segment spans residues 273 to 293 (KMASVFYTLVIPMLNPLIYSL). At 294–316 (RNKDVKTALQRFMTNLCYSFKTM) the chain is on the cytoplasmic side.

This sequence belongs to the G-protein coupled receptor 1 family.

It is found in the cell membrane. In terms of biological role, odorant receptor. This chain is Olfactory receptor 8J1 (OR8J1), found in Homo sapiens (Human).